The sequence spans 187 residues: Elongation factor P (187 aa).

Belongs to the elongation factor P family.

Its subcellular location is the cytoplasm. It participates in protein biosynthesis; polypeptide chain elongation. Involved in peptide bond synthesis. Stimulates efficient translation and peptide-bond synthesis on native or reconstituted 70S ribosomes in vitro. Probably functions indirectly by altering the affinity of the ribosome for aminoacyl-tRNA, thus increasing their reactivity as acceptors for peptidyl transferase. The polypeptide is Elongation factor P (Zymomonas mobilis subsp. mobilis (strain ATCC 31821 / ZM4 / CP4)).